The chain runs to 274 residues: NAD kinase (274 aa).

Asp-60 serves as the catalytic Proton acceptor. NAD(+) is bound by residues 60 to 61, Lys-65, 127 to 128, and Arg-152; these read DG and NE.

It belongs to the NAD kinase family. Requires a divalent metal cation as cofactor.

Its subcellular location is the cytoplasm. The catalysed reaction is NAD(+) + ATP = ADP + NADP(+) + H(+). Functionally, involved in the regulation of the intracellular balance of NAD and NADP, and is a key enzyme in the biosynthesis of NADP. Catalyzes specifically the phosphorylation on 2'-hydroxyl of the adenosine moiety of NAD to yield NADP. This is NAD kinase from Mycoplasmoides gallisepticum (strain R(low / passage 15 / clone 2)) (Mycoplasma gallisepticum).